Consider the following 581-residue polypeptide: Moesin/ezrin/radixin homolog 1 (581 aa).

Positions methionine 8–arginine 298 constitute an FERM domain. A disordered region spans residues glutamine 452 to asparagine 519. The span at alanine 459–threonine 469 shows a compositional bias: low complexity. Residues glutamate 477 to isoleucine 486 are compositionally biased toward acidic residues. Positions phenylalanine 495 to asparagine 519 are enriched in basic and acidic residues. Phosphothreonine is present on threonine 562.

As to quaternary structure, interacts with cytoskeletal actin.

The protein resides in the cell junction. It is found in the adherens junction. It localises to the cell projection. Its subcellular location is the microvillus. The protein localises to the rhabdomere. The protein resides in the cell membrane. It is found in the cytoplasm. It localises to the cytoskeleton. In terms of biological role, involved in connections of major cytoskeletal structures to the plasma membrane. This chain is Moesin/ezrin/radixin homolog 1, found in Anopheles gambiae (African malaria mosquito).